The following is a 314-amino-acid chain: DNA-directed RNA polymerase subunit alpha (314 aa).

The segment at 1-228 (MIEIEKPKIE…EHLNIFVGLT (228 aa)) is alpha N-terminal domain (alpha-NTD). Positions 245–314 (KEKVLEMTIE…ELGLGLRKDD (70 aa)) are alpha C-terminal domain (alpha-CTD).

The protein belongs to the RNA polymerase alpha chain family. Homodimer. The RNAP catalytic core consists of 2 alpha, 1 beta, 1 beta' and 1 omega subunit. When a sigma factor is associated with the core the holoenzyme is formed, which can initiate transcription.

The catalysed reaction is RNA(n) + a ribonucleoside 5'-triphosphate = RNA(n+1) + diphosphate. DNA-dependent RNA polymerase catalyzes the transcription of DNA into RNA using the four ribonucleoside triphosphates as substrates. The protein is DNA-directed RNA polymerase subunit alpha of Bacillus licheniformis (strain ATCC 14580 / DSM 13 / JCM 2505 / CCUG 7422 / NBRC 12200 / NCIMB 9375 / NCTC 10341 / NRRL NRS-1264 / Gibson 46).